Here is a 128-residue protein sequence, read N- to C-terminus: L-ectoine synthase (128 aa).

This sequence belongs to the ectoine synthase family.

It catalyses the reaction (2S)-4-acetamido-2-aminobutanoate = L-ectoine + H2O. The protein operates within amine and polyamine biosynthesis; ectoine biosynthesis; L-ectoine from L-aspartate 4-semialdehyde: step 3/3. Catalyzes the circularization of gamma-N-acetyl-alpha,gamma-diaminobutyric acid (ADABA) to ectoine (1,4,5,6-tetrahydro-2-methyl-4-pyrimidine carboxylic acid), which is an excellent osmoprotectant. The protein is L-ectoine synthase of Vibrio atlanticus (strain LGP32) (Vibrio splendidus (strain Mel32)).